A 330-amino-acid polypeptide reads, in one-letter code: Carbonic anhydrase (330 aa).

Residues 1-109 (MSTASAFATN…AAARIDQITA (109 aa)) are chloroplast transit peptide-like.

Belongs to the beta-class carbonic anhydrase family.

It localises to the cytoplasm. It carries out the reaction hydrogencarbonate + H(+) = CO2 + H2O. In terms of biological role, reversible hydration of carbon dioxide. This chain is Carbonic anhydrase, found in Flaveria brownii (Brown's yellowtops).